The sequence spans 1388 residues: Kinesin-like protein KIF15 (1388 aa).

Residues 1 to 25 form a disordered region; that stretch reads MAPGCKTELRSVTNGQSNQPSNEGD. Residues 10–22 are compositionally biased toward polar residues; the sequence is RSVTNGQSNQPSN. A Kinesin motor domain is found at 26–363; the sequence is AIKVFVRIRP…LNFAQRAKLI (338 aa). 109-116 contributes to the ATP binding site; it reads GQTGSGKT. Positions 368 to 1388 form a coiled coil; that stretch reads VVNEDTQGNV…FLKEKKRSES (1021 aa). Thr-399 carries the phosphothreonine modification. A Phosphoserine modification is found at Ser-568. Lys-1009 is subject to N6-acetyllysine. Ser-1141 and Ser-1169 each carry phosphoserine. The segment at 1228–1250 is disordered; sequence QKENSDQNHPDNQQLKNEQEESI.

This sequence belongs to the TRAFAC class myosin-kinesin ATPase superfamily. Kinesin family. KLP2 subfamily. Interacts with MKI67 and TPX2. As to expression, expressed in testis, colon, thymus and in breast cancer.

It localises to the cytoplasm. It is found in the cytoskeleton. The protein resides in the spindle. Plus-end directed kinesin-like motor enzyme involved in mitotic spindle assembly. This chain is Kinesin-like protein KIF15 (KIF15), found in Homo sapiens (Human).